The following is a 447-amino-acid chain: Ion-translocating oxidoreductase complex subunit C (447 aa).

2 consecutive 4Fe-4S ferredoxin-type domains span residues 359–389 and 399–430; these read AEVLRDEATVCIHCARCVDVCPMNLLPGRIA and RCREYFALNCIECGECAVVCPAKRHLVQLIRY. Cys-369, Cys-372, Cys-375, Cys-379, Cys-408, Cys-411, Cys-414, and Cys-418 together coordinate [4Fe-4S] cluster.

The protein belongs to the 4Fe4S bacterial-type ferredoxin family. RnfC subfamily. As to quaternary structure, the Rnf complex is probably composed of eight subunits, including RnfA, RnfB, RnfC, RnfD, RnfE and RnfG. [4Fe-4S] cluster serves as cofactor.

It is found in the cell membrane. Part of a membrane-bound complex that couples electron transfer with translocation of ions across the membrane. Catalyzes Na(+) transport, most probably coupled to electron transfer from reduced ferredoxin to methanophenazine and heterodisulfide reductase. Involved in heterodisulfide reduction during methanogenesis from acetate. The protein is Ion-translocating oxidoreductase complex subunit C of Methanosarcina acetivorans (strain ATCC 35395 / DSM 2834 / JCM 12185 / C2A).